A 358-amino-acid chain; its full sequence is 3-ketosteroid-9-alpha-monooxygenase, ferredoxin reductase component (358 aa).

Residues 12–124 form the FAD-binding FR-type domain; it reads DHVLELQIAE…LAPSGNFVPT (113 aa). The 90-residue stretch at 269–358 folds into the 2Fe-2S ferredoxin-type domain; that stretch reads ATAVVELDGQ…SDSVEVTYDE (90 aa). C305, C310, C313, and C343 together coordinate [2Fe-2S] cluster.

As to quaternary structure, monomer. The two-component system 3-ketosteroid-9-alpha-monooxygenase is composed of an oxygenase component KshA and a reductase component KshB. FAD serves as cofactor. [2Fe-2S] cluster is required as a cofactor.

It carries out the reaction androsta-1,4-diene-3,17-dione + 2 reduced [2Fe-2S]-[ferredoxin] + O2 + 2 H(+) = 9alpha-hydroxyandrosta-1,4-diene-3,17-dione + 2 oxidized [2Fe-2S]-[ferredoxin] + H2O. The protein operates within lipid metabolism; steroid biosynthesis. Involved in the degradation of cholesterol. Catalyzes the introduction of a 9a-hydroxyl moiety into 1,4-androstadiene-3,17-dione (ADD) to yield the 9alpha-hydroxy-1,4-androstadiene-3,17-dione (9OHADD) intermediate which spontaneously form 3-hydroxy-9,10-seconandrost-1,3,5(10)-triene-9,17-dione (HSA) via the meta-cleavage of ring B with concomitant aromatization of ring A. The sequence is that of 3-ketosteroid-9-alpha-monooxygenase, ferredoxin reductase component (hmp) from Mycobacterium tuberculosis (strain CDC 1551 / Oshkosh).